The primary structure comprises 71 residues: Exodeoxyribonuclease 7 small subunit (71 aa).

Belongs to the XseB family. Heterooligomer composed of large and small subunits.

It localises to the cytoplasm. The catalysed reaction is Exonucleolytic cleavage in either 5'- to 3'- or 3'- to 5'-direction to yield nucleoside 5'-phosphates.. Its function is as follows. Bidirectionally degrades single-stranded DNA into large acid-insoluble oligonucleotides, which are then degraded further into small acid-soluble oligonucleotides. The chain is Exodeoxyribonuclease 7 small subunit from Endomicrobium trichonymphae.